A 58-amino-acid polypeptide reads, in one-letter code: Histatherin (58 aa).

Residues 1-19 (MKIFIFIFIMALILAMIRA) form the signal peptide.

Belongs to the histatin/statherin family. Expressed in mammary glands.

The protein localises to the secreted. This chain is Histatherin, found in Bos taurus (Bovine).